Consider the following 408-residue polypeptide: Arginine deiminase (408 aa).

Cys397 serves as the catalytic Amidino-cysteine intermediate.

This sequence belongs to the arginine deiminase family.

Its subcellular location is the cytoplasm. It catalyses the reaction L-arginine + H2O = L-citrulline + NH4(+). Its pathway is amino-acid degradation; L-arginine degradation via ADI pathway; carbamoyl phosphate from L-arginine: step 1/2. The protein is Arginine deiminase of Listeria innocua serovar 6a (strain ATCC BAA-680 / CLIP 11262).